A 348-amino-acid chain; its full sequence is Dual-specificity RNA methyltransferase RlmN (348 aa).

The active-site Proton acceptor is glutamate 94. The Radical SAM core domain maps to 100 to 330; it reads GKHNWTACIS…TAIIRASRGR (231 aa). Cysteine 107 and cysteine 336 are disulfide-bonded. Cysteine 114, cysteine 118, and cysteine 121 together coordinate [4Fe-4S] cluster. Residues 163–164, serine 195, 217–219, and asparagine 293 each bind S-adenosyl-L-methionine; these read GE and SLN. Catalysis depends on cysteine 336, which acts as the S-methylcysteine intermediate.

The protein belongs to the radical SAM superfamily. RlmN family. The cofactor is [4Fe-4S] cluster.

Its subcellular location is the cytoplasm. The enzyme catalyses adenosine(2503) in 23S rRNA + 2 reduced [2Fe-2S]-[ferredoxin] + 2 S-adenosyl-L-methionine = 2-methyladenosine(2503) in 23S rRNA + 5'-deoxyadenosine + L-methionine + 2 oxidized [2Fe-2S]-[ferredoxin] + S-adenosyl-L-homocysteine. It catalyses the reaction adenosine(37) in tRNA + 2 reduced [2Fe-2S]-[ferredoxin] + 2 S-adenosyl-L-methionine = 2-methyladenosine(37) in tRNA + 5'-deoxyadenosine + L-methionine + 2 oxidized [2Fe-2S]-[ferredoxin] + S-adenosyl-L-homocysteine. Functionally, specifically methylates position 2 of adenine 2503 in 23S rRNA and position 2 of adenine 37 in tRNAs. m2A2503 modification seems to play a crucial role in the proofreading step occurring at the peptidyl transferase center and thus would serve to optimize ribosomal fidelity. This Syntrophus aciditrophicus (strain SB) protein is Dual-specificity RNA methyltransferase RlmN.